A 228-amino-acid polypeptide reads, in one-letter code: Cytochrome c oxidase subunit 2 (228 aa).

Over 1–26 the chain is Mitochondrial intermembrane; sequence MRTWSNFNLQNSASPLMEQIIFFHDH. Residues 27 to 48 form a helical membrane-spanning segment; sequence TLIILIMITILVGYIMINLFFN. The Mitochondrial matrix segment spans residues 49 to 62; sequence KFINRFFLVGQMIE. A helical membrane pass occupies residues 63–82; that stretch reads LIWTVLPAITLIFIALPSLR. Topologically, residues 83-228 are mitochondrial intermembrane; it reads LLYLLDELNN…FINWINNYSY (146 aa). Residues His161, Cys196, Glu198, Cys200, His204, and Met207 each coordinate Cu cation. Glu198 serves as a coordination point for Mg(2+).

The protein belongs to the cytochrome c oxidase subunit 2 family. As to quaternary structure, component of the cytochrome c oxidase (complex IV, CIV), a multisubunit enzyme composed of a catalytic core of 3 subunits and several supernumerary subunits. The complex exists as a monomer or a dimer and forms supercomplexes (SCs) in the inner mitochondrial membrane with ubiquinol-cytochrome c oxidoreductase (cytochrome b-c1 complex, complex III, CIII). Cu cation is required as a cofactor.

It localises to the mitochondrion inner membrane. The enzyme catalyses 4 Fe(II)-[cytochrome c] + O2 + 8 H(+)(in) = 4 Fe(III)-[cytochrome c] + 2 H2O + 4 H(+)(out). Component of the cytochrome c oxidase, the last enzyme in the mitochondrial electron transport chain which drives oxidative phosphorylation. The respiratory chain contains 3 multisubunit complexes succinate dehydrogenase (complex II, CII), ubiquinol-cytochrome c oxidoreductase (cytochrome b-c1 complex, complex III, CIII) and cytochrome c oxidase (complex IV, CIV), that cooperate to transfer electrons derived from NADH and succinate to molecular oxygen, creating an electrochemical gradient over the inner membrane that drives transmembrane transport and the ATP synthase. Cytochrome c oxidase is the component of the respiratory chain that catalyzes the reduction of oxygen to water. Electrons originating from reduced cytochrome c in the intermembrane space (IMS) are transferred via the dinuclear copper A center (CU(A)) of subunit 2 and heme A of subunit 1 to the active site in subunit 1, a binuclear center (BNC) formed by heme A3 and copper B (CU(B)). The BNC reduces molecular oxygen to 2 water molecules using 4 electrons from cytochrome c in the IMS and 4 protons from the mitochondrial matrix. The protein is Cytochrome c oxidase subunit 2 (COII) of Galleria mellonella (Greater wax moth).